A 474-amino-acid polypeptide reads, in one-letter code: 6-phospho-beta-galactosidase (474 aa).

D-galactose 6-phosphate is bound by residues glutamine 19, histidine 116, asparagine 159, glutamate 160, and asparagine 297. Glutamate 160 serves as the catalytic Proton donor. The active-site Nucleophile is the glutamate 375. Positions 433, 434, 440, and 442 each coordinate D-galactose 6-phosphate.

Belongs to the glycosyl hydrolase 1 family.

It carries out the reaction a 6-phospho-beta-D-galactoside + H2O = D-galactose 6-phosphate + an alcohol. It functions in the pathway carbohydrate metabolism; lactose degradation; D-galactose 6-phosphate and beta-D-glucose from lactose 6-phosphate: step 1/1. This Lacticaseibacillus rhamnosus (Lactobacillus rhamnosus) protein is 6-phospho-beta-galactosidase.